The sequence spans 186 residues: Large ribosomal subunit protein uL10 (186 aa).

The protein belongs to the universal ribosomal protein uL10 family. Part of the ribosomal stalk of the 50S ribosomal subunit. The N-terminus interacts with L11 and the large rRNA to form the base of the stalk. The C-terminus forms an elongated spine to which L12 dimers bind in a sequential fashion forming a multimeric L10(L12)X complex.

Functionally, forms part of the ribosomal stalk, playing a central role in the interaction of the ribosome with GTP-bound translation factors. In Roseiflexus sp. (strain RS-1), this protein is Large ribosomal subunit protein uL10.